A 237-amino-acid chain; its full sequence is 7-cyano-7-deazaguanine synthase (237 aa).

F10–L20 provides a ligand contact to ATP. Zn(2+) contacts are provided by C189, C198, C201, and C204.

This sequence belongs to the QueC family. Zn(2+) serves as cofactor.

The enzyme catalyses 7-carboxy-7-deazaguanine + NH4(+) + ATP = 7-cyano-7-deazaguanine + ADP + phosphate + H2O + H(+). Its pathway is purine metabolism; 7-cyano-7-deazaguanine biosynthesis. Its function is as follows. Catalyzes the ATP-dependent conversion of 7-carboxy-7-deazaguanine (CDG) to 7-cyano-7-deazaguanine (preQ(0)). The polypeptide is 7-cyano-7-deazaguanine synthase (Aeromonas salmonicida (strain A449)).